The sequence spans 95 residues: Aspartyl/glutamyl-tRNA(Asn/Gln) amidotransferase subunit C (95 aa).

Belongs to the GatC family. Heterotrimer of A, B and C subunits.

It catalyses the reaction L-glutamyl-tRNA(Gln) + L-glutamine + ATP + H2O = L-glutaminyl-tRNA(Gln) + L-glutamate + ADP + phosphate + H(+). The catalysed reaction is L-aspartyl-tRNA(Asn) + L-glutamine + ATP + H2O = L-asparaginyl-tRNA(Asn) + L-glutamate + ADP + phosphate + 2 H(+). Its function is as follows. Allows the formation of correctly charged Asn-tRNA(Asn) or Gln-tRNA(Gln) through the transamidation of misacylated Asp-tRNA(Asn) or Glu-tRNA(Gln) in organisms which lack either or both of asparaginyl-tRNA or glutaminyl-tRNA synthetases. The reaction takes place in the presence of glutamine and ATP through an activated phospho-Asp-tRNA(Asn) or phospho-Glu-tRNA(Gln). The sequence is that of Aspartyl/glutamyl-tRNA(Asn/Gln) amidotransferase subunit C from Nitrosococcus oceani (strain ATCC 19707 / BCRC 17464 / JCM 30415 / NCIMB 11848 / C-107).